We begin with the raw amino-acid sequence, 285 residues long: Small ribosomal subunit protein uS3 (285 aa).

Positions 39–107 (VREFLKKKLK…PVAVNIEEVR (69 aa)) constitute a KH type-2 domain. The interval 211–285 (GDAPVMRGED…RAAPPAAKGE (75 aa)) is disordered. A compositionally biased stretch (basic and acidic residues) spans 217 to 241 (RGEDRPEDDRRRRNPRGDRPGDRRG). Residues 242 to 255 (PGAGRGGPGAGRGP) show a composition bias toward gly residues. Composition is skewed to low complexity over residues 256-267 (ADGASAAPSGDA) and 276-285 (RAAPPAAKGE).

The protein belongs to the universal ribosomal protein uS3 family. Part of the 30S ribosomal subunit. Forms a tight complex with proteins S10 and S14.

Functionally, binds the lower part of the 30S subunit head. Binds mRNA in the 70S ribosome, positioning it for translation. The sequence is that of Small ribosomal subunit protein uS3 from Leptothrix cholodnii (strain ATCC 51168 / LMG 8142 / SP-6) (Leptothrix discophora (strain SP-6)).